Consider the following 470-residue polypeptide: 3-isopropylmalate dehydratase large subunit (470 aa).

Residues C347, C407, and C410 each contribute to the [4Fe-4S] cluster site.

This sequence belongs to the aconitase/IPM isomerase family. LeuC type 1 subfamily. As to quaternary structure, heterodimer of LeuC and LeuD. Requires [4Fe-4S] cluster as cofactor.

It carries out the reaction (2R,3S)-3-isopropylmalate = (2S)-2-isopropylmalate. The protein operates within amino-acid biosynthesis; L-leucine biosynthesis; L-leucine from 3-methyl-2-oxobutanoate: step 2/4. Catalyzes the isomerization between 2-isopropylmalate and 3-isopropylmalate, via the formation of 2-isopropylmaleate. This chain is 3-isopropylmalate dehydratase large subunit, found in Shewanella amazonensis (strain ATCC BAA-1098 / SB2B).